Here is a 1165-residue protein sequence, read N- to C-terminus: Phenyloxazoline synthase MbtB (1165 aa).

Residues 5–78 (PARSEDIREE…AWAQLVTAGR (74 aa)) form the Carrier 1 domain. An O-(pantetheine 4'-phosphoryl)serine modification is found at serine 39. The interval 77–100 (GRQDTDSAAPPADSSGDPSGETEP) is disordered. Residues 97–393 (ETEPFALAPM…SSLLLDVDLV (297 aa)) form a condensation/cyclization region. The adenylation stretch occupies residues 578–973 (SYAQLRDQAL…RVPGVRTAVA (396 aa)). A Carrier 2 domain is found at 1055 to 1131 (AASTPLEGAL…ALAAVLRAAE (77 aa)). An O-(pantetheine 4'-phosphoryl)serine modification is found at serine 1090.

It belongs to the ATP-dependent AMP-binding enzyme family. MbtB subfamily. Requires pantetheine 4'-phosphate as cofactor. 4'-phosphopantetheine is transferred from CoA to a specific serine in each of the two carrier protein domains, leading to their activation from apo to holo forms.

It participates in siderophore biosynthesis; mycobactin biosynthesis. Its function is as follows. Involved in the initial steps of the mycobactin biosynthetic pathway. Putatively couples activated salicylic acid with serine or threonine and cyclizes this precursor to the hydroxyphenyloxazoline ring system present in this class of siderophores. The sequence is that of Phenyloxazoline synthase MbtB (mbtB) from Mycolicibacterium paratuberculosis (strain ATCC BAA-968 / K-10) (Mycobacterium paratuberculosis).